The chain runs to 594 residues: UvrABC system protein C (594 aa).

The region spanning 14-91 (DQPGCYLMKD…IKKYDPKYNI (78 aa)) is the GIY-YIG domain. The UVR domain maps to 196–231 (KEIRSELETKMYEASEKLEFERAKELRDQIAHIDAI).

It belongs to the UvrC family. Interacts with UvrB in an incision complex.

It is found in the cytoplasm. In terms of biological role, the UvrABC repair system catalyzes the recognition and processing of DNA lesions. UvrC both incises the 5' and 3' sides of the lesion. The N-terminal half is responsible for the 3' incision and the C-terminal half is responsible for the 5' incision. This chain is UvrABC system protein C, found in Bacillus mycoides (strain KBAB4) (Bacillus weihenstephanensis).